The sequence spans 472 residues: Succinate-semialdehyde dehydrogenase [NADP(+)] (472 aa).

Residues 134–135 (WN), 158–161 (KHAS), and 210–211 (GS) contribute to the NADP(+) site. Glu232 acts as the Proton acceptor in catalysis. Leu233 contributes to the NADP(+) binding site. Cys266 acts as the Nucleophile in catalysis. Position 363 (Glu363) interacts with NADP(+).

This sequence belongs to the aldehyde dehydrogenase family.

The enzyme catalyses succinate semialdehyde + NADP(+) + H2O = succinate + NADPH + 2 H(+). Catalyzes the NADP(+)-dependent oxidation of succinate semialdehyde to succinate. It is believed to be the main source of succinate semialdehyde dehydrogenase activity in Mycobacterium. The polypeptide is Succinate-semialdehyde dehydrogenase [NADP(+)] (gabD1) (Mycobacterium avium (strain 104)).